The following is a 338-amino-acid chain: Ketol-acid reductoisomerase (NADP(+)) (338 aa).

Positions 1–181 (MKVFYDKDAD…GGGRAGIIET (181 aa)) constitute a KARI N-terminal Rossmann domain. NADP(+) is bound by residues 24 to 27 (YGSQ), R47, and S52. H107 is a catalytic residue. G133 provides a ligand contact to NADP(+). The 146-residue stretch at 182–327 (NFREETETDL…SKLRAMMPWI (146 aa)) folds into the KARI C-terminal knotted domain. Residues D190, E194, E226, and E230 each contribute to the Mg(2+) site. S251 is a substrate binding site.

It belongs to the ketol-acid reductoisomerase family. The cofactor is Mg(2+).

The enzyme catalyses (2R)-2,3-dihydroxy-3-methylbutanoate + NADP(+) = (2S)-2-acetolactate + NADPH + H(+). It carries out the reaction (2R,3R)-2,3-dihydroxy-3-methylpentanoate + NADP(+) = (S)-2-ethyl-2-hydroxy-3-oxobutanoate + NADPH + H(+). The protein operates within amino-acid biosynthesis; L-isoleucine biosynthesis; L-isoleucine from 2-oxobutanoate: step 2/4. It participates in amino-acid biosynthesis; L-valine biosynthesis; L-valine from pyruvate: step 2/4. In terms of biological role, involved in the biosynthesis of branched-chain amino acids (BCAA). Catalyzes an alkyl-migration followed by a ketol-acid reduction of (S)-2-acetolactate (S2AL) to yield (R)-2,3-dihydroxy-isovalerate. In the isomerase reaction, S2AL is rearranged via a Mg-dependent methyl migration to produce 3-hydroxy-3-methyl-2-ketobutyrate (HMKB). In the reductase reaction, this 2-ketoacid undergoes a metal-dependent reduction by NADPH to yield (R)-2,3-dihydroxy-isovalerate. The polypeptide is Ketol-acid reductoisomerase (NADP(+)) (Paraburkholderia xenovorans (strain LB400)).